A 455-amino-acid polypeptide reads, in one-letter code: Epoxide hydrolase 1 (455 aa).

Residues 1–21 (MLLELLLASVLGFVIYWFVSG) traverse the membrane as a helical; Signal-anchor for type III membrane protein segment. Residues 22–455 (DKEESLPLED…CKFVGLVERQ (434 aa)) lie on the Cytoplasmic side of the membrane. Catalysis depends on D226, which acts as the Nucleophile. Position 295 is a dimethylated arginine (R295). Residue Y374 is the Proton donor of the active site. The active-site Proton acceptor is H431.

It belongs to the peptidase S33 family.

It localises to the microsome membrane. The protein resides in the endoplasmic reticulum membrane. It carries out the reaction cis-stilbene oxide + H2O = (1R,2R)-hydrobenzoin. It catalyses the reaction 1-(4-methoxyphenyl)-N-methyl-N-[(3-methyloxetan-3-yl)methyl]methanamine + H2O = 2-{[(4-methoxybenzyl)(methyl)amino]methyl}-2-methylpropane-1,3-diol. The catalysed reaction is 8,9-epoxy-(5Z,11Z,14Z)-eicosatrienoate + H2O = 8,9-dihydroxy-(5Z,11Z,14Z)-eicosatrienoate. The enzyme catalyses 11,12-epoxy-(5Z,8Z,14Z)-eicosatrienoate + H2O = 11,12-dihydroxy-(5Z,8Z,14Z)-eicosatrienoate. It carries out the reaction 2-(5Z,8Z,11Z,14Z-eicosatetraenoyl)-glycerol + H2O = glycerol + (5Z,8Z,11Z,14Z)-eicosatetraenoate + H(+). Inhibited by 10-hydroxystearamide and methoxy-arachidonyl fluorophosphate. In terms of biological role, biotransformation enzyme that catalyzes the hydrolysis of arene and aliphatic epoxides to less reactive and more water soluble dihydrodiols by the trans addition of water. May play a role in the metabolism of endogenous lipids such as epoxide-containing fatty acids. Metabolizes the abundant endocannabinoid 2-arachidonoylglycerol (2-AG) to free arachidonic acid (AA) and glycerol. Binds 20(S)-hydroxycholesterol (20(S)-OHC). The protein is Epoxide hydrolase 1 (EPHX1) of Oryctolagus cuniculus (Rabbit).